A 308-amino-acid chain; its full sequence is tRNA-cytidine(32) 2-sulfurtransferase (308 aa).

The PP-loop motif motif lies at 39–44 (SGGKDS). The [4Fe-4S] cluster site is built by cysteine 114, cysteine 117, and cysteine 205.

Belongs to the TtcA family. As to quaternary structure, homodimer. Mg(2+) is required as a cofactor. Requires [4Fe-4S] cluster as cofactor.

The protein resides in the cytoplasm. The enzyme catalyses cytidine(32) in tRNA + S-sulfanyl-L-cysteinyl-[cysteine desulfurase] + AH2 + ATP = 2-thiocytidine(32) in tRNA + L-cysteinyl-[cysteine desulfurase] + A + AMP + diphosphate + H(+). The protein operates within tRNA modification. Catalyzes the ATP-dependent 2-thiolation of cytidine in position 32 of tRNA, to form 2-thiocytidine (s(2)C32). The sulfur atoms are provided by the cysteine/cysteine desulfurase (IscS) system. This is tRNA-cytidine(32) 2-sulfurtransferase from Cupriavidus taiwanensis (strain DSM 17343 / BCRC 17206 / CCUG 44338 / CIP 107171 / LMG 19424 / R1) (Ralstonia taiwanensis (strain LMG 19424)).